A 235-amino-acid polypeptide reads, in one-letter code: 7-cyano-7-deazaguanine synthase (235 aa).

Residue 10–20 participates in ATP binding; the sequence is FSGGQDSTTCL. Zn(2+) contacts are provided by C198, C213, C216, and C219.

Belongs to the QueC family. The cofactor is Zn(2+).

It carries out the reaction 7-carboxy-7-deazaguanine + NH4(+) + ATP = 7-cyano-7-deazaguanine + ADP + phosphate + H2O + H(+). Its pathway is purine metabolism; 7-cyano-7-deazaguanine biosynthesis. Catalyzes the ATP-dependent conversion of 7-carboxy-7-deazaguanine (CDG) to 7-cyano-7-deazaguanine (preQ(0)). This Paracidovorax citrulli (strain AAC00-1) (Acidovorax citrulli) protein is 7-cyano-7-deazaguanine synthase.